A 291-amino-acid chain; its full sequence is MRSTPLGTTAVSPASIKHNSYGYGRFVSSSGVSNFSIHRRRRHSSFSISQAPSQINSGACNASQIVDLFPAVSPEIVVREARLEDCWEVAETHCSSFFPGYSFPLDVVLRVDRLMAMVMGFSIPPGCQRTCLVAVIGSSVDETICFGSDDFKIGAFDAKISLNKGYVAGILTVDTVADYLPRKGPLRQRRTGIAYVSNVAVRENFRRKGIAKRLIWKAEALAKNWGCRAIGLHCDLNNLGATKLYKDQGFRSIKIPEGATWPQPKTSPDTRFTFMMKLVNNNNTQALEQFR.

The N-terminal 61 residues, 1 to 61, are a transit peptide targeting the chloroplast; sequence MRSTPLGTTA…PSQINSGACN (61 aa). One can recognise an N-acetyltransferase domain in the interval 76-280; it reads IVVREARLED…RFTFMMKLVN (205 aa). Acetyl-CoA-binding positions include 199 to 201 and 207 to 212; these read VAV and RKGIAK. K217 carries the post-translational modification N6-acetyllysine. Residues 238 to 240 and Y245 contribute to the acetyl-CoA site; that span reads NLG. Residue Y245 is the Proton donor of the active site. Residues K254 and K265 each carry the N6-acetyllysine modification.

It belongs to the acetyltransferase family. GNAT subfamily. In terms of assembly, oligomer. Post-translationally, autoacetylated at K-217, K-254 and K-265. In terms of tissue distribution, expressed in green tissues.

It localises to the plastid. The protein resides in the chloroplast. It carries out the reaction an N-terminal L-alpha-aminoacyl-[protein] + acetyl-CoA = N-terminal N(alpha)-acetyl-L-alpha-aminoacyl-[protein] + CoA + H(+). The enzyme catalyses L-lysyl-[protein] + acetyl-CoA = N(6)-acetyl-L-lysyl-[protein] + CoA + H(+). It catalyses the reaction N-terminal L-alanyl-[protein] + acetyl-CoA = N-terminal N(alpha)-acetyl-L-alanyl-[protein] + CoA + H(+). The catalysed reaction is N-terminal L-seryl-[protein] + acetyl-CoA = N-terminal N(alpha)-acetyl-L-seryl-[protein] + CoA + H(+). It carries out the reaction N-terminal L-threonyl-[protein] + acetyl-CoA = N-terminal N(alpha)-acetyl-L-threonyl-[protein] + CoA + H(+). The enzyme catalyses N-terminal L-methionyl-[protein] + acetyl-CoA = N-terminal N(alpha)-acetyl-L-methionyl-[protein] + CoA + H(+). It catalyses the reaction N-terminal L-valyl-[protein] + acetyl-CoA = N-terminal N(alpha)-acetyl-L-valyl-[protein] + CoA + H(+). The catalysed reaction is N-terminal glycyl-[protein] + acetyl-CoA = N-terminal N(alpha)-acetylglycyl-[protein] + CoA + H(+). Protein acetyltransferase with dual specificity triggering both N-alpha-acetylation (NTA), with a large spectrum of modified N-termini, including methionine, alanine, serine, threonine and to a lower extent glycine and valine as substrates, and epsilon-lysine acetylation (KA) of several plastid proteins. The sequence is that of GCN5-related N-acetyltransferase 4, chloroplastic from Arabidopsis thaliana (Mouse-ear cress).